A 144-amino-acid chain; its full sequence is Putative lipoprotein MAH_0816 (144 aa).

Residues 1–24 (MRWPMQNRTTAVIAVALATTALVA) form the signal peptide. C25 is lipidated: N-palmitoyl cysteine. Residue C25 is the site of S-diacylglycerol cysteine attachment.

This sequence belongs to the mycobacterial 19 kDa antigen family.

It is found in the cell membrane. The chain is Putative lipoprotein MAH_0816 from Mycobacterium avium subsp. hominissuis (strain TH135).